The primary structure comprises 578 residues: Arginine--tRNA ligase (578 aa).

The short motif at 127 to 137 (PNLAKEMHVGH) is the 'HIGH' region element.

The protein belongs to the class-I aminoacyl-tRNA synthetase family. As to quaternary structure, monomer.

It localises to the cytoplasm. It catalyses the reaction tRNA(Arg) + L-arginine + ATP = L-arginyl-tRNA(Arg) + AMP + diphosphate. This is Arginine--tRNA ligase from Pseudomonas putida (strain ATCC 700007 / DSM 6899 / JCM 31910 / BCRC 17059 / LMG 24140 / F1).